A 679-amino-acid chain; its full sequence is Dihydroxyacetone phosphate acyltransferase (679 aa).

Position 11 is a phosphoserine (Ser-11). The HXXXXD motif motif lies at 161 to 166 (HRSYID). Lys-642 is subject to N6-acetyllysine.

This sequence belongs to the GPAT/DAPAT family. Part of a heterotrimeric complex composed of GNPAT, AGPS and a modified form of GNPAT.

Its subcellular location is the peroxisome membrane. It catalyses the reaction dihydroxyacetone phosphate + an acyl-CoA = a 1-acylglycerone 3-phosphate + CoA. The catalysed reaction is dihydroxyacetone phosphate + hexadecanoyl-CoA = 1-hexadecanoylglycerone 3-phosphate + CoA. Its pathway is membrane lipid metabolism; glycerophospholipid metabolism. Functionally, dihydroxyacetonephosphate acyltransferase catalyzing the first step in the biosynthesis of plasmalogens, a subset of phospholipids that differ from other glycerolipids by having an alkyl chain attached through a vinyl ether linkage at the sn-1 position of the glycerol backbone, and which unique physical properties have an impact on various aspects of cell signaling and membrane biology. The sequence is that of Dihydroxyacetone phosphate acyltransferase from Oryctolagus cuniculus (Rabbit).